The following is a 169-amino-acid chain: Cell division inhibitor SulA (169 aa).

Residues 106 to 112 (ALRTGNY) form a ftsZ binding region. Residues 162–169 (KIHSNLYH) are lon protease binding.

Belongs to the SulA family. In terms of assembly, interacts with FtsZ. Post-translationally, is rapidly cleaved and degraded by the Lon protease once DNA damage is repaired.

Its function is as follows. Component of the SOS system and an inhibitor of cell division. Accumulation of SulA causes rapid cessation of cell division and the appearance of long, non-septate filaments. In the presence of GTP, binds a polymerization-competent form of FtsZ in a 1:1 ratio, thus inhibiting FtsZ polymerization and therefore preventing it from participating in the assembly of the Z ring. This mechanism prevents the premature segregation of damaged DNA to daughter cells during cell division. This chain is Cell division inhibitor SulA, found in Escherichia coli O7:K1 (strain IAI39 / ExPEC).